The following is a 446-amino-acid chain: Peroxisomal biogenesis factor 3 (446 aa).

Topologically, residues 1-12 (MARTGLQRHRGK) are peroxisomal. A helical membrane pass occupies residues 13 to 33 (LLGTGAVLGGLVVAGVVAAVA). Over 34–446 (AKRWVRRQQQ…SASVYSNFGV (413 aa)) the chain is Cytoplasmic. The segment at 101–122 (RAGEDDEQGSGGHASAGEGSVS) is disordered.

It belongs to the peroxin-3 family.

The protein resides in the peroxisome membrane. Its function is as follows. Involved in peroxisome biosynthesis. The protein is Peroxisomal biogenesis factor 3 (PEX3) of Eremothecium gossypii (strain ATCC 10895 / CBS 109.51 / FGSC 9923 / NRRL Y-1056) (Yeast).